Here is a 276-residue protein sequence, read N- to C-terminus: Large ribosomal subunit protein uL2 (276 aa).

The disordered stretch occupies residues 212-276 (NRHRGIRPQT…KLIISRKKHK (65 aa)). Over residues 257–276 (YKTRKKKASDKLIISRKKHK) the composition is skewed to basic residues.

It belongs to the universal ribosomal protein uL2 family. As to quaternary structure, part of the 50S ribosomal subunit. Forms a bridge to the 30S subunit in the 70S ribosome.

Its function is as follows. One of the primary rRNA binding proteins. Required for association of the 30S and 50S subunits to form the 70S ribosome, for tRNA binding and peptide bond formation. It has been suggested to have peptidyltransferase activity; this is somewhat controversial. Makes several contacts with the 16S rRNA in the 70S ribosome. This Helicobacter acinonychis (strain Sheeba) protein is Large ribosomal subunit protein uL2.